A 782-amino-acid chain; its full sequence is E3 ubiquitin-protein ligase SopA (782 aa).

A disordered region spans residues 137-171 (VSVSANNRPTVSEGRTPPVSPSLSLQATSSPSSPA). A compositionally biased stretch (low complexity) spans 157–171 (PSLSLQATSSPSSPA). Cysteine 753 acts as the Glycyl thioester intermediate in catalysis.

It belongs to the SopA E3 ligase family. Post-translationally, ubiquitinated in the presence of host E1 ubiquitin-activating enzyme, E2 ubiquitin-conjugating enzyme and ubiquitin.

It is found in the secreted. The protein resides in the host cell. The catalysed reaction is S-ubiquitinyl-[E2 ubiquitin-conjugating enzyme]-L-cysteine + [acceptor protein]-L-lysine = [E2 ubiquitin-conjugating enzyme]-L-cysteine + N(6)-ubiquitinyl-[acceptor protein]-L-lysine.. In terms of biological role, effector proteins function to alter host cell physiology and promote bacterial survival in host tissues. This protein is an E3 ubiquitin ligase that interferes with host's ubiquitination pathway. In Salmonella newport (strain SL254), this protein is E3 ubiquitin-protein ligase SopA (sopA).